The sequence spans 609 residues: Autophagy-related protein 22-1 (609 aa).

A run of 4 helical transmembrane segments spans residues 35–55, 117–137, 151–171, and 176–196; these read YGWAAEVFTVCAMGSFLPITL, TASFAMYTFSVSVFIQAILII, LLLMAFAVIGSVSTMLFLGVV, and MVGAVIAIIANTCFGASFVLL. The segment covering 214-231 has biased composition (basic and acidic residues); sequence AREPRPALDDSRAQEGHS. Positions 214–240 are disordered; the sequence is AREPRPALDDSRAQEGHSDTTNGIEHG. Residue asparagine 244 is glycosylated (N-linked (GlcNAc...) asparagine). Residues 287-307 form a helical membrane-spanning segment; the sequence is IGIGYIGAIILQIVCILVVIA. Asparagine 309 carries an N-linked (GlcNAc...) asparagine glycan. 3 helical membrane-spanning segments follow: residues 317–337, 381–401, and 415–435; these read LVLFLIGLWWFIFSIPAALWL, ILLFLAAWLLLSDGIATVSGT, and AALGLINVIAMVAGVLGAFSW. Asparagine 443 carries N-linked (GlcNAc...) asparagine glycosylation. A run of 4 helical transmembrane segments spans residues 450 to 470, 477 to 497, 522 to 542, and 552 to 572; these read IIACILLFELVPLYGLLGFIP, FLGLQQPWEMFPLGIVYGLVM, ALYAITDKGSSIFGPTIVGII, and AFVFLAILIFLPLPLMLLVDV.

It belongs to the ATG22 family.

The protein resides in the vacuole membrane. In terms of biological role, vacuolar effluxer which mediate the efflux of amino acids resulting from autophagic degradation. The release of autophagic amino acids allows the maintenance of protein synthesis and viability during nitrogen starvation. The polypeptide is Autophagy-related protein 22-1 (atg22-1) (Aspergillus fumigatus (strain ATCC MYA-4609 / CBS 101355 / FGSC A1100 / Af293) (Neosartorya fumigata)).